A 632-amino-acid chain; its full sequence is Phosphatidylinositol 3,4,5-trisphosphate 3-phosphatase and protein-tyrosine-phosphatase PTEN2B (632 aa).

The span at 1-12 (METDPANSSSKS) shows a compositional bias: polar residues. The disordered stretch occupies residues 1-98 (METDPANSSS…RESPPSIFSS (98 aa)). The span at 39 to 48 (SAEREAHEDS) shows a compositional bias: basic and acidic residues. A compositionally biased stretch (polar residues) spans 63-73 (MPASSTGSEPL). The segment covering 87 to 98 (SPRESPPSIFSS) has biased composition (low complexity). The 180-residue stretch at 189 to 368 (RRYQEGEFDL…KYYERVQNQF (180 aa)) folds into the Phosphatase tensin-type domain. Cys307 (phosphocysteine intermediate) is an active-site residue. A C2 tensin-type domain is found at 375-502 (ERRCMLRGFR…FHVEIVMIEP (128 aa)). The tract at residues 504-603 (NSQPTKSKSD…SGHYNPIPNN (100 aa)) is disordered. The span at 505 to 527 (SQPTKSKSDSTQQQSQSSSSADS) shows a compositional bias: low complexity. Positions 535 to 549 (KDDDVFSDSDGEEEG) are enriched in acidic residues. Ser541 carries the post-translational modification Phosphoserine. Polar residues predominate over residues 550 to 571 (NSQSYSTNEKTASSMHTTSKPH). The segment covering 584–594 (ANRSVTSSSSS) has biased composition (low complexity).

Belongs to the PTEN phosphatase protein family. In terms of tissue distribution, expressed, at low levels, in seedlings, roots, stems, leaves, flowers and siliques. However, at protein level, not observed in older leaves, flowers and siliques.

The catalysed reaction is O-phospho-L-tyrosyl-[protein] + H2O = L-tyrosyl-[protein] + phosphate. The enzyme catalyses a 1,2-diacyl-sn-glycero-3-phospho-(1D-myo-inositol-3,4,5-trisphosphate) + H2O = a 1,2-diacyl-sn-glycero-3-phospho-(1D-myo-inositol-4,5-bisphosphate) + phosphate. Its function is as follows. Protein tyrosine phosphatase that also exhibits a weak lipid phosphatase activity towards PtdIns(3)P. This Arabidopsis thaliana (Mouse-ear cress) protein is Phosphatidylinositol 3,4,5-trisphosphate 3-phosphatase and protein-tyrosine-phosphatase PTEN2B.